The primary structure comprises 206 residues: Large ribosomal subunit protein uL4 (206 aa).

Belongs to the universal ribosomal protein uL4 family. As to quaternary structure, part of the 50S ribosomal subunit.

Its function is as follows. One of the primary rRNA binding proteins, this protein initially binds near the 5'-end of the 23S rRNA. It is important during the early stages of 50S assembly. It makes multiple contacts with different domains of the 23S rRNA in the assembled 50S subunit and ribosome. In terms of biological role, forms part of the polypeptide exit tunnel. This Methylorubrum populi (strain ATCC BAA-705 / NCIMB 13946 / BJ001) (Methylobacterium populi) protein is Large ribosomal subunit protein uL4.